Here is a 452-residue protein sequence, read N- to C-terminus: Cysteine--tRNA ligase (452 aa).

C27 serves as a coordination point for Zn(2+). The short motif at 29–39 (PTVQDHFHIGH) is the 'HIGH' region element. Zn(2+) contacts are provided by D207, H232, and E236. A 'KMSKS' region motif is present at residues 265–269 (KMSKS). K268 contacts ATP.

Belongs to the class-I aminoacyl-tRNA synthetase family. The cofactor is Zn(2+).

The protein resides in the cytoplasm. It catalyses the reaction tRNA(Cys) + L-cysteine + ATP = L-cysteinyl-tRNA(Cys) + AMP + diphosphate. This is Cysteine--tRNA ligase from Thermoplasma acidophilum (strain ATCC 25905 / DSM 1728 / JCM 9062 / NBRC 15155 / AMRC-C165).